A 522-amino-acid polypeptide reads, in one-letter code: Bifunctional purine biosynthesis protein PurH (522 aa).

Positions 1–145 (MKPIARALIS…KNHAAVTVIV (145 aa)) constitute an MGS-like domain.

It belongs to the PurH family.

The enzyme catalyses (6R)-10-formyltetrahydrofolate + 5-amino-1-(5-phospho-beta-D-ribosyl)imidazole-4-carboxamide = 5-formamido-1-(5-phospho-D-ribosyl)imidazole-4-carboxamide + (6S)-5,6,7,8-tetrahydrofolate. It carries out the reaction IMP + H2O = 5-formamido-1-(5-phospho-D-ribosyl)imidazole-4-carboxamide. It participates in purine metabolism; IMP biosynthesis via de novo pathway; 5-formamido-1-(5-phospho-D-ribosyl)imidazole-4-carboxamide from 5-amino-1-(5-phospho-D-ribosyl)imidazole-4-carboxamide (10-formyl THF route): step 1/1. Its pathway is purine metabolism; IMP biosynthesis via de novo pathway; IMP from 5-formamido-1-(5-phospho-D-ribosyl)imidazole-4-carboxamide: step 1/1. The chain is Bifunctional purine biosynthesis protein PurH from Nitrosococcus oceani (strain ATCC 19707 / BCRC 17464 / JCM 30415 / NCIMB 11848 / C-107).